A 207-amino-acid chain; its full sequence is dTTP/UTP pyrophosphatase (207 aa).

Asp-68 (proton acceptor) is an active-site residue.

The protein belongs to the Maf family. YhdE subfamily. A divalent metal cation is required as a cofactor.

It is found in the cytoplasm. It carries out the reaction dTTP + H2O = dTMP + diphosphate + H(+). It catalyses the reaction UTP + H2O = UMP + diphosphate + H(+). Functionally, nucleoside triphosphate pyrophosphatase that hydrolyzes dTTP and UTP. May have a dual role in cell division arrest and in preventing the incorporation of modified nucleotides into cellular nucleic acids. The polypeptide is dTTP/UTP pyrophosphatase (Staphylothermus marinus (strain ATCC 43588 / DSM 3639 / JCM 9404 / F1)).